The sequence spans 430 residues: Histidine--tRNA ligase (430 aa).

Belongs to the class-II aminoacyl-tRNA synthetase family. Homodimer.

Its subcellular location is the cytoplasm. It carries out the reaction tRNA(His) + L-histidine + ATP = L-histidyl-tRNA(His) + AMP + diphosphate + H(+). The sequence is that of Histidine--tRNA ligase (hisS) from Chlamydia pneumoniae (Chlamydophila pneumoniae).